Reading from the N-terminus, the 410-residue chain is Putative F-box/kelch-repeat protein At1g15680 (410 aa).

In terms of domain architecture, F-box spans 13 to 58 (CKRRIELPEELLAEIVARLPFISITRFKSVCKGWRSLIESTYFRHL). 2 Kelch repeats span residues 177 to 227 (VVCM…SLKK) and 274 to 327 (AYTT…YFPV).

The protein is Putative F-box/kelch-repeat protein At1g15680 of Arabidopsis thaliana (Mouse-ear cress).